The sequence spans 238 residues: Uridylate kinase (238 aa).

Residue 12–15 (KLSG) participates in ATP binding. Gly-54 lines the UMP pocket. The ATP site is built by Gly-55 and Arg-59. Residues Asp-74 and 135–142 (TGNPFFTT) contribute to the UMP site. Residues Thr-162, Tyr-168, and Asp-171 each contribute to the ATP site.

It belongs to the UMP kinase family. In terms of assembly, homohexamer.

Its subcellular location is the cytoplasm. The catalysed reaction is UMP + ATP = UDP + ADP. It participates in pyrimidine metabolism; CTP biosynthesis via de novo pathway; UDP from UMP (UMPK route): step 1/1. Its activity is regulated as follows. Inhibited by UTP. Its function is as follows. Catalyzes the reversible phosphorylation of UMP to UDP. The chain is Uridylate kinase from Bordetella pertussis (strain Tohama I / ATCC BAA-589 / NCTC 13251).